Here is a 124-residue protein sequence, read N- to C-terminus: Small ribosomal subunit protein uS12c (124 aa).

The protein belongs to the universal ribosomal protein uS12 family. Part of the 30S ribosomal subunit.

It localises to the plastid. The protein resides in the chloroplast. Functionally, with S4 and S5 plays an important role in translational accuracy. Located at the interface of the 30S and 50S subunits. The protein is Small ribosomal subunit protein uS12c (rps12) of Cyanidium caldarium (Red alga).